The chain runs to 189 residues: UPF0301 protein PP_4995 (189 aa).

This sequence belongs to the UPF0301 (AlgH) family.

This chain is UPF0301 protein PP_4995, found in Pseudomonas putida (strain ATCC 47054 / DSM 6125 / CFBP 8728 / NCIMB 11950 / KT2440).